A 350-amino-acid polypeptide reads, in one-letter code: Glucose-6-phosphate 3-dehydrogenase (350 aa).

The protein belongs to the Gfo/Idh/MocA family.

It catalyses the reaction D-glucose 6-phosphate + NAD(+) = 3-dehydro-D-glucose 6-phosphate + NADH + H(+). The protein operates within antibiotic biosynthesis; kanosamine biosynthesis. Its function is as follows. Involved in the biosynthesis of kanosamine (3-amino-3-deoxy-D-glucose), which is known to have antibiotic and antifungal properties, and to be a precursor of the antibiotic neotrehalosadiamine (3,3'-diamino-3,3'-dideoxy-alpha,beta-trehalose (NTD)). Catalyzes the oxidation of glucose 6-phosphate to 3-oxo-D-glucose 6-phosphate. It can only use NAD. In Bacillus subtilis (strain 168), this protein is Glucose-6-phosphate 3-dehydrogenase (ntdC).